The sequence spans 383 residues: Oxysterol-binding protein-related protein 4B (383 aa).

The protein belongs to the OSBP family. In terms of tissue distribution, expressed in stems and flowers.

Its function is as follows. May be involved in the transport of sterols. This Arabidopsis thaliana (Mouse-ear cress) protein is Oxysterol-binding protein-related protein 4B (ORP4B).